The primary structure comprises 267 residues: Tryptophan synthase alpha chain (267 aa).

Residues Glu47 and Asp58 each act as proton acceptor in the active site.

This sequence belongs to the TrpA family. Tetramer of two alpha and two beta chains.

The enzyme catalyses (1S,2R)-1-C-(indol-3-yl)glycerol 3-phosphate + L-serine = D-glyceraldehyde 3-phosphate + L-tryptophan + H2O. It functions in the pathway amino-acid biosynthesis; L-tryptophan biosynthesis; L-tryptophan from chorismate: step 5/5. In terms of biological role, the alpha subunit is responsible for the aldol cleavage of indoleglycerol phosphate to indole and glyceraldehyde 3-phosphate. The chain is Tryptophan synthase alpha chain from Chlorobium chlorochromatii (strain CaD3).